The chain runs to 364 residues: Fructose-1,6-bisphosphatase class 1 2 (364 aa).

Mg(2+)-binding residues include E101, D123, L125, and D126. Substrate is bound by residues 126–129 (DGSS) and N218. Mg(2+) is bound at residue E290.

It belongs to the FBPase class 1 family. Homotetramer. Mg(2+) is required as a cofactor.

The protein localises to the cytoplasm. It catalyses the reaction beta-D-fructose 1,6-bisphosphate + H2O = beta-D-fructose 6-phosphate + phosphate. Its pathway is carbohydrate biosynthesis; gluconeogenesis. This is Fructose-1,6-bisphosphatase class 1 2 from Cupriavidus necator (strain ATCC 17699 / DSM 428 / KCTC 22496 / NCIMB 10442 / H16 / Stanier 337) (Ralstonia eutropha).